Reading from the N-terminus, the 362-residue chain is Alanine racemase (362 aa).

The Proton acceptor; specific for D-alanine role is filled by K33. N6-(pyridoxal phosphate)lysine is present on K33. R129 is a substrate binding site. Catalysis depends on Y254, which acts as the Proton acceptor; specific for L-alanine. A substrate-binding site is contributed by M302.

This sequence belongs to the alanine racemase family. It depends on pyridoxal 5'-phosphate as a cofactor.

The catalysed reaction is L-alanine = D-alanine. The protein operates within amino-acid biosynthesis; D-alanine biosynthesis; D-alanine from L-alanine: step 1/1. In terms of biological role, catalyzes the interconversion of L-alanine and D-alanine. May also act on other amino acids. This chain is Alanine racemase (alr), found in Xylella fastidiosa (strain 9a5c).